The following is a 118-amino-acid chain: ATP synthase subunit c (118 aa).

2 helical membrane-spanning segments follow: residues 34-54 and 88-108; these read AIFA…GAVG and MAMA…LIFA.

The protein belongs to the ATPase C chain family. As to quaternary structure, F-type ATPases have 2 components, F(1) - the catalytic core - and F(0) - the membrane proton channel. F(1) has five subunits: alpha(3), beta(3), gamma(1), delta(1), epsilon(1). F(0) has three main subunits: a(1), b(2) and c(10-14). The alpha and beta chains form an alternating ring which encloses part of the gamma chain. F(1) is attached to F(0) by a central stalk formed by the gamma and epsilon chains, while a peripheral stalk is formed by the delta and b chains.

The protein resides in the cell inner membrane. Functionally, f(1)F(0) ATP synthase produces ATP from ADP in the presence of a proton or sodium gradient. F-type ATPases consist of two structural domains, F(1) containing the extramembraneous catalytic core and F(0) containing the membrane proton channel, linked together by a central stalk and a peripheral stalk. During catalysis, ATP synthesis in the catalytic domain of F(1) is coupled via a rotary mechanism of the central stalk subunits to proton translocation. In terms of biological role, key component of the F(0) channel; it plays a direct role in translocation across the membrane. A homomeric c-ring of between 10-14 subunits forms the central stalk rotor element with the F(1) delta and epsilon subunits. The sequence is that of ATP synthase subunit c from Syntrophus aciditrophicus (strain SB).